The primary structure comprises 389 residues: Lipid-A-disaccharide synthase (389 aa).

The protein belongs to the LpxB family.

The enzyme catalyses a lipid X + a UDP-2-N,3-O-bis[(3R)-3-hydroxyacyl]-alpha-D-glucosamine = a lipid A disaccharide + UDP + H(+). It participates in bacterial outer membrane biogenesis; LPS lipid A biosynthesis. Functionally, condensation of UDP-2,3-diacylglucosamine and 2,3-diacylglucosamine-1-phosphate to form lipid A disaccharide, a precursor of lipid A, a phosphorylated glycolipid that anchors the lipopolysaccharide to the outer membrane of the cell. The protein is Lipid-A-disaccharide synthase of Paraburkholderia xenovorans (strain LB400).